The following is a 531-amino-acid chain: RCC1 and BTB domain-containing protein 1 (531 aa).

6 RCC1 repeats span residues Asn-40–Thr-91, Asp-93–Ala-145, Gly-147–Asp-198, Ser-199–Asp-250, Gly-252–Thr-302, and Gly-304–Val-356. BTB domains follow at residues Ala-370–Pro-437 and Glu-470–Leu-499.

In terms of tissue distribution, in the retina, mainly expressed in the inner retina with strong signals reaching up to the outer plexiform layer (at protein level).

The protein localises to the nucleus. May be involved in cell cycle regulation by chromatin remodeling. The polypeptide is RCC1 and BTB domain-containing protein 1 (Rcbtb1) (Mus musculus (Mouse)).